Here is a 338-residue protein sequence, read N- to C-terminus: D-erythrose-4-phosphate dehydrogenase (338 aa).

12-13 (RI) lines the NAD(+) pocket. Residues 154-156 (SCT), arginine 200, 213-214 (TK), and arginine 236 each bind substrate. The active-site Nucleophile is the cysteine 155. Position 318 (asparagine 318) interacts with NAD(+).

The protein belongs to the glyceraldehyde-3-phosphate dehydrogenase family. Epd subfamily. Homotetramer.

It is found in the cytoplasm. The catalysed reaction is D-erythrose 4-phosphate + NAD(+) + H2O = 4-phospho-D-erythronate + NADH + 2 H(+). The protein operates within cofactor biosynthesis; pyridoxine 5'-phosphate biosynthesis; pyridoxine 5'-phosphate from D-erythrose 4-phosphate: step 1/5. Catalyzes the NAD-dependent conversion of D-erythrose 4-phosphate to 4-phosphoerythronate. The protein is D-erythrose-4-phosphate dehydrogenase of Pectobacterium atrosepticum (strain SCRI 1043 / ATCC BAA-672) (Erwinia carotovora subsp. atroseptica).